A 136-amino-acid chain; its full sequence is Large ribosomal subunit protein eL27 (136 aa).

The KOW domain occupies 5–40 (MKPGKVVMVLAGRYAGRKAVIVKNIDDGTADRPYSH).

Belongs to the eukaryotic ribosomal protein eL27 family. Component of the large ribosomal subunit.

It is found in the cytoplasm. It localises to the cytosol. Its subcellular location is the rough endoplasmic reticulum. Its function is as follows. Component of the large ribosomal subunit. In Ictalurus punctatus (Channel catfish), this protein is Large ribosomal subunit protein eL27 (rpl27).